We begin with the raw amino-acid sequence, 349 residues long: Peroxidase 23 (349 aa).

An N-terminal signal peptide occupies residues 1–29 (MGFSSSLSCSAMGALIVGCLLLQASNSNA). The residue at position 30 (Gln-30) is a Pyrrolidone carboxylic acid. 4 cysteine pairs are disulfide-bonded: Cys-40/Cys-120, Cys-73/Cys-78, Cys-126/Cys-329, and Cys-206/Cys-238. Residue His-71 is the Proton acceptor of the active site. Ca(2+) contacts are provided by Asp-72, Val-75, Gly-77, Asp-79, and Ser-81. Asn-86 carries an N-linked (GlcNAc...) asparagine glycan. Pro-168 contributes to the substrate binding site. His-199 is a binding site for heme b. Thr-200 contacts Ca(2+). N-linked (GlcNAc...) asparagine glycans are attached at residues Asn-217 and Asn-243. Ca(2+) contacts are provided by Asp-251, Thr-254, and Asp-259.

This sequence belongs to the peroxidase family. Classical plant (class III) peroxidase subfamily. Requires heme b as cofactor. It depends on Ca(2+) as a cofactor.

Its subcellular location is the secreted. It is found in the vacuole. It catalyses the reaction 2 a phenolic donor + H2O2 = 2 a phenolic radical donor + 2 H2O. In terms of biological role, removal of H(2)O(2), oxidation of toxic reductants, biosynthesis and degradation of lignin, suberization, auxin catabolism, response to environmental stresses such as wounding, pathogen attack and oxidative stress. These functions might be dependent on each isozyme/isoform in each plant tissue. The polypeptide is Peroxidase 23 (PER23) (Arabidopsis thaliana (Mouse-ear cress)).